A 377-amino-acid chain; its full sequence is Transcription factor Sox-17-alpha-B (377 aa).

Disordered stretches follow at residues 1–20 (MSSPDGGYGSDDQNQGKCSV) and 31–57 (QWSEPMTSLGEGKLKSDANSRSKAEGR). Positions 42–57 (GKLKSDANSRSKAEGR) are enriched in basic and acidic residues. The HMG box DNA-binding region spans 58–126 (IRRPMNAFMV…QHMQDHPNYK (69 aa)). The Sox C-terminal domain maps to 262-376 (GSPVEGMMAC…TAVYYCNYPS (115 aa)). Residues 282 to 321 (MYLPGSTRHHQHPQAGQPSPPPEAQQLGRADQTQQADMMA) form a disordered region. Positions 325–333 (TEFEQYLSY) match the 9aaTAD motif. Positions 326–331 (EFEQYL) are required for transcriptional activity and interaction with ctnnb1.

Interacts (via C-terminus) with ctnnb1/beta-catenin (via Armadillo repeats); this interaction is required for inhibition of wnt-signaling. As to expression, enriched in the embryonic endoderm. Expressed in the embryonic gut, with strong expression in the posterior gut during tailbud stages. Expressed at a low level in the adult kidney and spleen.

The protein resides in the nucleus. Its function is as follows. Transcription activator. Binds to the DNA sequence 5'-AACAAT-3'. All of the sox17 proteins are required for embryonic endoderm development and gastrulation movements, and show some redundancy in function. In addition, the sox17 proteins have distinct but overlapping roles in later gut development. Acts downstream of vegt-signaling in endoderm differentiation to induce a range of endodermal genes both directly (including endodermin and dhh/chh) and indirectly. Also represses wnt-responsive genes to inhibit wnt/beta-catenin signaling. In Xenopus laevis (African clawed frog), this protein is Transcription factor Sox-17-alpha-B (sox17a-b).